The chain runs to 290 residues: Cbb3-type cytochrome c oxidase subunit CcoP (290 aa).

The disordered stretch occupies residues 1–22 (MSVKPTKQKPGEPPTTGHSWDG). Residues 1–37 (MSVKPTKQKPGEPPTTGHSWDGIEEFDNPMPRWWLWT) are Cytoplasmic-facing. Residues 38–58 (FYVTIVWAIGYSILYPAWPLI) traverse the membrane as a helical segment. Residues 59-290 (NGATNGLIGH…VYVHGLGGGE (232 aa)) are Periplasmic-facing. Cytochrome c domains are found at residues 109–199 (YATN…LQIS) and 206–287 (ALSA…HGLG). Heme c is bound by residues Cys-122, Cys-125, His-126, Met-174, Cys-219, Cys-222, His-223, and Met-264.

Belongs to the CcoP / FixP family. In terms of assembly, component of the cbb3-type cytochrome c oxidase at least composed of CcoN, CcoO, CcoQ and CcoP. Requires heme c as cofactor.

It is found in the cell inner membrane. It participates in energy metabolism; oxidative phosphorylation. Functionally, C-type cytochrome. Part of the cbb3-type cytochrome c oxidase complex. CcoP subunit is required for transferring electrons from donor cytochrome c via its heme groups to CcoO subunit. From there, electrons are shuttled to the catalytic binuclear center of CcoN subunit where oxygen reduction takes place. The complex also functions as a proton pump. The polypeptide is Cbb3-type cytochrome c oxidase subunit CcoP (Cereibacter sphaeroides (strain ATCC 17023 / DSM 158 / JCM 6121 / CCUG 31486 / LMG 2827 / NBRC 12203 / NCIMB 8253 / ATH 2.4.1.) (Rhodobacter sphaeroides)).